A 362-amino-acid polypeptide reads, in one-letter code: Leucoanthocyanidin dioxygenase (362 aa).

The disordered stretch occupies residues 1–23 (MVTSAMGPSPRVEELARSGLDTI). Residues 214 to 313 (LIVQMKINFY…RISWAVFCEP (100 aa)) enclose the Fe2OG dioxygenase domain. 3 residues coordinate Fe cation: histidine 238, aspartate 240, and histidine 294. The active site involves arginine 304.

Belongs to the iron/ascorbate-dependent oxidoreductase family. Fe cation serves as cofactor. L-ascorbate is required as a cofactor. In terms of tissue distribution, expressed in red but not in green forma of P.frutescens. In red forma, it is predominantly expressed in stems and leaves, but not in roots.

The catalysed reaction is a (2R,3S,4S)-leucoanthocyanidin + 2-oxoglutarate + O2 = a 4-H-anthocyanidin with a 3-hydroxy group + succinate + CO2 + 2 H2O. The protein operates within pigment biosynthesis; anthocyanin biosynthesis. Its function is as follows. Oxidation of leucoanthocyanidins into anthocyanidins. The protein is Leucoanthocyanidin dioxygenase (ANS) of Perilla frutescens (Beefsteak mint).